The following is a 530-amino-acid chain: Hyccin 2 (530 aa).

Phosphothreonine occurs at positions 30 and 306. Phosphoserine is present on residues Ser-321 and Ser-341. Residues Arg-328 to Gln-410 are disordered. The segment covering Ser-353–Gly-373 has biased composition (polar residues). 4 positions are modified to phosphoserine: Ser-430, Ser-442, Ser-444, and Ser-491. Residues Glu-502–Val-530 are disordered. Residues Thr-514–Val-530 show a composition bias toward polar residues.

It belongs to the Hyccin family. As to quaternary structure, component of a phosphatidylinositol 4-kinase (PI4K) complex, composed of PI4KA, EFR3 (EFR3A or EFR3B), TTC7 (TTC7A or TTC7B) and HYCC (HYCC1 or HYCC2).

It is found in the cytoplasm. It localises to the cytosol. The protein resides in the cell membrane. In terms of biological role, component of a complex required to localize phosphatidylinositol 4-kinase (PI4K) to the plasma membrane. This Homo sapiens (Human) protein is Hyccin 2.